A 156-amino-acid chain; its full sequence is Small ribosomal subunit protein uS7 (156 aa).

Belongs to the universal ribosomal protein uS7 family. Part of the 30S ribosomal subunit. Contacts proteins S9 and S11.

Functionally, one of the primary rRNA binding proteins, it binds directly to 16S rRNA where it nucleates assembly of the head domain of the 30S subunit. Is located at the subunit interface close to the decoding center, probably blocks exit of the E-site tRNA. In Dichelobacter nodosus (strain VCS1703A), this protein is Small ribosomal subunit protein uS7.